The sequence spans 498 residues: MTELGMELESVRLATFGEWPLNAPVSAEDLVANGFFATGNWLEAECHFCHVRIDRWEYGDQVAERHRRSSPICSMVLAPNHCGNVPRSQESDNEGNSVVDSPESCSCPDLLLEANRLVTFKDWPNPNITPQALAKAGFYYLNRLDHVKCVWCNGVIAKWEKNDNAFEEHKRFFPQCPRVQMGPLIEFATGKNLDELGIQPTTLPLRPKYACVDARLRTFTDWPISNIQPASALAQAGLYYQKIGDQVRCFHCNIGLRSWQKEDEPWFEHAKWSPKCQFVLLAKGPAYVSEVLATTAANASSQPATAPAPTLQADVLMDEAPAKEALALGIDGGVVRNAIQRKLLSSGCAFSTLDELLHDIFDDAGAGAALEVREPPEPSAPFIEPCQATTSKAASVPIPVADSIPAKPQAAEAVANISKITDEIQKMSVATPNGNLSLEEENRQLKDARLCKVCLDEEVGVVFLPCGHLATCNQCAPSVANCPMCRADIKGFVRTFLS.

3 BIR repeats span residues 12–77, 116–180, and 215–280; these read RLAT…SMVL, RLVT…PRVQ, and RLRT…QFVL. Cys-249, Cys-252, His-269, and Cys-276 together coordinate Zn(2+). The RING-type zinc-finger motif lies at 451–486; the sequence is CKVCLDEEVGVVFLPCGHLATCNQCAPSVANCPMCR.

It belongs to the IAP family. Interacts with the caspase Strica. Interacts (via BIR2 domain) with rpr and grim. Interacts (via the BIR2 and BIR3 domains) with hid. Interacts (via BIR3 domain) with Drice. Interacts with Dredd; likely to bind Dredd simultaneously with Fadd to form a trimeric complex. Post-translationally, caspase-dependent cleavage is required for suppression of Drice-mediated cell death. In terms of tissue distribution, expressed in both principal and stellar cells of the Malphigian tubules.

It localises to the nucleus. Its subcellular location is the cytoplasm. Required for activation of NF-kappaB transcription factors in the immune deficiency (Imd) signaling cascade which is essential for innate immune responses upon infection by Gram-negative bacteria. Promotes cytoplasmic cleavage of Rel and its translocation to the nucleus where it drives expression of antimicrobial peptides. Binds, polyubiquitinates and activates Dredd which is required for Rel-mediated induction of antimicrobial peptides. Anti-apoptotic protein which binds, ubiquitinates and inactivates the effector caspase Drice. Suppresses rpr and hid-dependent cell death in the eye. However, has also been shown to have little, if any, role in the regulation of the canonical caspase-dependent apoptosis pathway. Plays a role in regulating the expression of ion channels. This Drosophila melanogaster (Fruit fly) protein is Death-associated inhibitor of apoptosis 2 (Diap2).